A 348-amino-acid chain; its full sequence is Dihydroorotase (348 aa).

Zn(2+) contacts are provided by H14 and H16. Substrate contacts are provided by residues 16–18 and N42; that span reads HLR. Zn(2+) contacts are provided by K100, H137, and H175. K100 carries the N6-carboxylysine modification. H137 contributes to the substrate binding site. L220 provides a ligand contact to substrate. Residue D248 participates in Zn(2+) binding. D248 is an active-site residue. Substrate is bound by residues H252 and A264.

The protein belongs to the metallo-dependent hydrolases superfamily. DHOase family. Class II DHOase subfamily. As to quaternary structure, homodimer. Requires Zn(2+) as cofactor.

The catalysed reaction is (S)-dihydroorotate + H2O = N-carbamoyl-L-aspartate + H(+). Its pathway is pyrimidine metabolism; UMP biosynthesis via de novo pathway; (S)-dihydroorotate from bicarbonate: step 3/3. Catalyzes the reversible cyclization of carbamoyl aspartate to dihydroorotate. This chain is Dihydroorotase, found in Synechococcus sp. (strain CC9605).